Here is a 502-residue protein sequence, read N- to C-terminus: Uric acid degradation bifunctional protein (502 aa).

The OHCU decarboxylase stretch occupies residues 1-178 (MMRLKQLNEM…NSMTKHKERV (178 aa)). H68 serves as the catalytic Proton donor; for OHCU decarboxylase activity. 5-hydroxy-2-oxo-4-ureido-2,5-dihydro-1H-imidazole-5-carboxylate is bound by residues P69, 81-85 (SQEEQ), and 116-120 (FVMAV). The tract at residues 179 to 502 (MYYGKGDVFA…DEPDHKGALK (324 aa)) is urate oxidase. Catalysis depends on K183, which acts as the Charge relay system; for urate oxidase activity. K194 serves as the catalytic Charge relay system. T243 serves as the catalytic Charge relay system; for urate oxidase activity. T243, D244, F354, R371, I419, Q420, and N446 together coordinate urate.

This sequence in the N-terminal section; belongs to the OHCU decarboxylase family. In the C-terminal section; belongs to the uricase family.

The enzyme catalyses 5-hydroxy-2-oxo-4-ureido-2,5-dihydro-1H-imidazole-5-carboxylate + H(+) = (S)-allantoin + CO2. It carries out the reaction urate + O2 + H2O = 5-hydroxyisourate + H2O2. It participates in purine metabolism; urate degradation; (S)-allantoin from urate: step 1/3. The protein operates within purine metabolism; urate degradation; (S)-allantoin from urate: step 3/3. In terms of biological role, catalyzes two steps in the degradation of uric acid, i.e. the oxidation of uric acid to 5-hydroxyisourate (HIU) and the stereoselective decarboxylation of 2-oxo-4-hydroxy-4-carboxy-5-ureidoimidazoline (OHCU) to (S)-allantoin. This chain is Uric acid degradation bifunctional protein (uao), found in Bacillus sp. (strain TB-90).